Here is a 164-residue protein sequence, read N- to C-terminus: uncharacterized protein (164 aa).

This is an uncharacterized protein from Acanthamoeba polyphaga mimivirus (APMV).